The primary structure comprises 373 residues: tRNA/tmRNA (uracil-C(5))-methyltransferase (373 aa).

S-adenosyl-L-methionine is bound by residues Gln-190, Tyr-219, Asn-224, Glu-240, and Asp-300. The active-site Nucleophile is the Cys-325. Catalysis depends on Glu-359, which acts as the Proton acceptor.

It belongs to the class I-like SAM-binding methyltransferase superfamily. RNA M5U methyltransferase family. TrmA subfamily.

The catalysed reaction is uridine(54) in tRNA + S-adenosyl-L-methionine = 5-methyluridine(54) in tRNA + S-adenosyl-L-homocysteine + H(+). The enzyme catalyses uridine(341) in tmRNA + S-adenosyl-L-methionine = 5-methyluridine(341) in tmRNA + S-adenosyl-L-homocysteine + H(+). Functionally, dual-specificity methyltransferase that catalyzes the formation of 5-methyluridine at position 54 (m5U54) in all tRNAs, and that of position 341 (m5U341) in tmRNA (transfer-mRNA). The chain is tRNA/tmRNA (uracil-C(5))-methyltransferase from Chromohalobacter salexigens (strain ATCC BAA-138 / DSM 3043 / CIP 106854 / NCIMB 13768 / 1H11).